The following is a 140-amino-acid chain: Large ribosomal subunit protein uL11 (140 aa).

The protein belongs to the universal ribosomal protein uL11 family. As to quaternary structure, part of the ribosomal stalk of the 50S ribosomal subunit. Interacts with L10 and the large rRNA to form the base of the stalk. L10 forms an elongated spine to which L12 dimers bind in a sequential fashion forming a multimeric L10(L12)X complex. In terms of processing, one or more lysine residues are methylated.

Forms part of the ribosomal stalk which helps the ribosome interact with GTP-bound translation factors. The protein is Large ribosomal subunit protein uL11 of Geobacter sp. (strain M21).